The primary structure comprises 73 residues: Translation initiation factor IF-1 (73 aa).

The 72-residue stretch at 1–72 (MAKEDHIEMA…SKGRIIFRDK (72 aa)) folds into the S1-like domain.

The protein belongs to the IF-1 family. As to quaternary structure, component of the 30S ribosomal translation pre-initiation complex which assembles on the 30S ribosome in the order IF-2 and IF-3, IF-1 and N-formylmethionyl-tRNA(fMet); mRNA recruitment can occur at any time during PIC assembly.

Its subcellular location is the cytoplasm. Its function is as follows. One of the essential components for the initiation of protein synthesis. Stabilizes the binding of IF-2 and IF-3 on the 30S subunit to which N-formylmethionyl-tRNA(fMet) subsequently binds. Helps modulate mRNA selection, yielding the 30S pre-initiation complex (PIC). Upon addition of the 50S ribosomal subunit IF-1, IF-2 and IF-3 are released leaving the mature 70S translation initiation complex. The chain is Translation initiation factor IF-1 from Legionella pneumophila (strain Paris).